A 250-amino-acid polypeptide reads, in one-letter code: Probable transcriptional regulatory protein Paes_0496 (250 aa).

The protein belongs to the TACO1 family.

It localises to the cytoplasm. This chain is Probable transcriptional regulatory protein Paes_0496, found in Prosthecochloris aestuarii (strain DSM 271 / SK 413).